A 381-amino-acid chain; its full sequence is Cobalt-precorrin-5B C(1)-methyltransferase (381 aa).

It belongs to the CbiD family.

The enzyme catalyses Co-precorrin-5B + S-adenosyl-L-methionine = Co-precorrin-6A + S-adenosyl-L-homocysteine. The protein operates within cofactor biosynthesis; adenosylcobalamin biosynthesis; cob(II)yrinate a,c-diamide from sirohydrochlorin (anaerobic route): step 6/10. Functionally, catalyzes the methylation of C-1 in cobalt-precorrin-5B to form cobalt-precorrin-6A. In Methylococcus capsulatus (strain ATCC 33009 / NCIMB 11132 / Bath), this protein is Cobalt-precorrin-5B C(1)-methyltransferase.